The primary structure comprises 107 residues: Ribonuclease P protein component 4 (107 aa).

Residues Cys-66, Cys-69, Cys-92, and Cys-95 each contribute to the Zn(2+) site.

It belongs to the eukaryotic/archaeal RNase P protein component 4 family. Consists of a catalytic RNA component and at least 4-5 protein subunits. The cofactor is Zn(2+).

The protein localises to the cytoplasm. The catalysed reaction is Endonucleolytic cleavage of RNA, removing 5'-extranucleotides from tRNA precursor.. Its function is as follows. Part of ribonuclease P, a protein complex that generates mature tRNA molecules by cleaving their 5'-ends. This Methanosarcina mazei (strain ATCC BAA-159 / DSM 3647 / Goe1 / Go1 / JCM 11833 / OCM 88) (Methanosarcina frisia) protein is Ribonuclease P protein component 4.